A 441-amino-acid chain; its full sequence is G-protein coupled receptor family C group 5 member C (441 aa).

A signal peptide spans 1-22 (MATHKTLLMCLGLPLFFPGALA). Topologically, residues 23–49 (QNHAPPGCSPDLDPLYYNLCDRSGAWG) are extracellular. Residues 50 to 70 (IVLEAVAGAGIITTFVLTIIL) traverse the membrane as a helical segment. The Cytoplasmic portion of the chain corresponds to 71 to 84 (VASLPFVQDTKKRS). Residues 85–105 (LLGTQVFFLLGTLGLFCLVFA) traverse the membrane as a helical segment. Topologically, residues 106–119 (CVVKPDFSTCASRR) are extracellular. The chain crosses the membrane as a helical span at residues 120-140 (FLFGVLFAICFSCLIAHTLSL). At 141–154 (NFLARKNHGPRGWV) the chain is on the cytoplasmic side. Residues 155–175 (IFTVALLLTLVEVIINTEWLI) traverse the membrane as a helical segment. At 176-207 (ITLVRGGGQVSTPGNGSADWTVTSPCAIANMD) the chain is on the extracellular side. N190 carries an N-linked (GlcNAc...) asparagine glycan. A helical membrane pass occupies residues 208–228 (FVMALIYVMLLLLAAFLGAWP). Over 229–240 (TLCGRFKRWRKH) the chain is Cytoplasmic. Residues 241–261 (GVFVLLTTATSIAIWVVWIVM) form a helical membrane-spanning segment. Residues 262–278 (YTYGNKQHHSPTWDDPT) are Extracellular-facing. The helical transmembrane segment at 279–299 (LAIALAANAWTFVFFYVIPEV) threads the bilayer. Over 300–441 (SQVTKPSPEQ…DQSPKNKTRW (142 aa)) the chain is Cytoplasmic. Residues S343, S382, S402, and S405 each carry the phosphoserine modification. Y413 carries the post-translational modification Phosphotyrosine. Residues 419–441 (QVATPTKDGKISQDQSPKNKTRW) form a disordered region. At T422 the chain carries Phosphothreonine. Polar residues predominate over residues 430–441 (SQDQSPKNKTRW). At S434 the chain carries Phosphoserine.

The protein belongs to the G-protein coupled receptor 3 family.

It is found in the cell membrane. This retinoic acid-inducible G-protein coupled receptor provide evidence for a possible interaction between retinoid and G-protein signaling pathways. This Rattus norvegicus (Rat) protein is G-protein coupled receptor family C group 5 member C (Gprc5c).